The sequence spans 95 residues: Small ribosomal subunit protein uS19 (95 aa).

The protein belongs to the universal ribosomal protein uS19 family.

Functionally, protein S19 forms a complex with S13 that binds strongly to the 16S ribosomal RNA. The polypeptide is Small ribosomal subunit protein uS19 (Thermosipho africanus (strain TCF52B)).